A 276-amino-acid polypeptide reads, in one-letter code: Formamidopyrimidine-DNA glycosylase (276 aa).

Proline 2 acts as the Schiff-base intermediate with DNA in catalysis. Glutamate 3 acts as the Proton donor in catalysis. Lysine 58 functions as the Proton donor; for beta-elimination activity in the catalytic mechanism. Residues histidine 94, arginine 112, and arginine 157 each coordinate DNA. The FPG-type zinc finger occupies phenylalanine 242 to arginine 276. The active-site Proton donor; for delta-elimination activity is the arginine 266.

Belongs to the FPG family. As to quaternary structure, monomer. Zn(2+) is required as a cofactor.

The enzyme catalyses Hydrolysis of DNA containing ring-opened 7-methylguanine residues, releasing 2,6-diamino-4-hydroxy-5-(N-methyl)formamidopyrimidine.. The catalysed reaction is 2'-deoxyribonucleotide-(2'-deoxyribose 5'-phosphate)-2'-deoxyribonucleotide-DNA = a 3'-end 2'-deoxyribonucleotide-(2,3-dehydro-2,3-deoxyribose 5'-phosphate)-DNA + a 5'-end 5'-phospho-2'-deoxyribonucleoside-DNA + H(+). Its function is as follows. Involved in base excision repair of DNA damaged by oxidation or by mutagenic agents. Acts as a DNA glycosylase that recognizes and removes damaged bases. Has a preference for oxidized purines, such as 7,8-dihydro-8-oxoguanine (8-oxoG). Has AP (apurinic/apyrimidinic) lyase activity and introduces nicks in the DNA strand. Cleaves the DNA backbone by beta-delta elimination to generate a single-strand break at the site of the removed base with both 3'- and 5'-phosphates. This Paraburkholderia phymatum (strain DSM 17167 / CIP 108236 / LMG 21445 / STM815) (Burkholderia phymatum) protein is Formamidopyrimidine-DNA glycosylase.